The chain runs to 355 residues: Ubiquinone biosynthesis protein COQ4 homolog, mitochondrial (355 aa).

Residues histidine 134, aspartate 135, histidine 138, and glutamate 150 each coordinate Zn(2+).

This sequence belongs to the COQ4 family. In terms of assembly, component of a multi-subunit COQ enzyme complex. Zn(2+) is required as a cofactor.

It localises to the mitochondrion inner membrane. The catalysed reaction is a 4-hydroxy-3-methoxy-5-(all-trans-polyprenyl)benzoate + H(+) = a 2-methoxy-6-(all-trans-polyprenyl)phenol + CO2. It functions in the pathway cofactor biosynthesis; ubiquinone biosynthesis. Lyase that catalyzes the C1-decarboxylation of 4-hydroxy-3-methoxy-5-(all-trans-polyprenyl)benzoic acid into 2-methoxy-6-(all-trans-polyprenyl)phenol during ubiquinone biosynthesis. The polypeptide is Ubiquinone biosynthesis protein COQ4 homolog, mitochondrial (Plasmodium vivax (strain Salvador I)).